We begin with the raw amino-acid sequence, 361 residues long: Phosphate acyltransferase (361 aa).

The interval 340-361 (VPADGAATEQGPTPRRIAPPRT) is disordered.

It belongs to the PlsX family. As to quaternary structure, homodimer. Probably interacts with PlsY.

The protein resides in the cytoplasm. The enzyme catalyses a fatty acyl-[ACP] + phosphate = an acyl phosphate + holo-[ACP]. It functions in the pathway lipid metabolism; phospholipid metabolism. Its function is as follows. Catalyzes the reversible formation of acyl-phosphate (acyl-PO(4)) from acyl-[acyl-carrier-protein] (acyl-ACP). This enzyme utilizes acyl-ACP as fatty acyl donor, but not acyl-CoA. The sequence is that of Phosphate acyltransferase from Anaeromyxobacter dehalogenans (strain 2CP-1 / ATCC BAA-258).